Reading from the N-terminus, the 144-residue chain is Large ribosomal subunit protein bL31c (144 aa).

Residues Met-1 to Cys-48 constitute a chloroplast transit peptide.

This sequence belongs to the bacterial ribosomal protein bL31 family. Type A subfamily. Part of the 50S ribosomal subunit.

It localises to the plastid. The protein localises to the chloroplast. Its function is as follows. Binds the 23S rRNA. In Arabidopsis thaliana (Mouse-ear cress), this protein is Large ribosomal subunit protein bL31c (RPL31).